Consider the following 168-residue polypeptide: Lipoprotein signal peptidase (168 aa).

Helical transmembrane passes span W15–D35, V47–S67, W75–L95, and A107–V127. Catalysis depends on residues D128 and D146. A helical transmembrane segment spans residues A141–F161.

Belongs to the peptidase A8 family.

The protein resides in the cell inner membrane. It carries out the reaction Release of signal peptides from bacterial membrane prolipoproteins. Hydrolyzes -Xaa-Yaa-Zaa-|-(S,diacylglyceryl)Cys-, in which Xaa is hydrophobic (preferably Leu), and Yaa (Ala or Ser) and Zaa (Gly or Ala) have small, neutral side chains.. It participates in protein modification; lipoprotein biosynthesis (signal peptide cleavage). This protein specifically catalyzes the removal of signal peptides from prolipoproteins. The chain is Lipoprotein signal peptidase from Vibrio campbellii (strain ATCC BAA-1116).